The following is a 441-amino-acid chain: RUN domain-containing protein 3A (441 aa).

The interval 1-293 is interaction with RAP2A; the sequence is MEASFVQTTM…LQLQLEEAAA (293 aa). In terms of domain architecture, RUN spans 52-184; it reads DDSSEEFVNF…IDFSFCLKGE (133 aa). Threonine 210 is modified (phosphothreonine). Residues 211–234 form a disordered region; it reads DEEERHSAESSTSEDNSPEHPYLP. Position 227 is a phosphoserine (serine 227). A coiled-coil region spans residues 262-317; the sequence is YLEELVRLRESQLKDLEAENRRLQLQLEEAAAQNQREKRELEGVILELQEQLTGLI. A compositionally biased stretch (polar residues) spans 367–379; it reads PLSAEASLSSDSQ. Residues 367-399 form a disordered region; that stretch reads PLSAEASLSSDSQRLGEGKRDEEPWGPIGKDPT. The span at 380-389 shows a compositional bias: basic and acidic residues; sequence RLGEGKRDEE. 2 positions are modified to phosphoserine: serine 411 and serine 414.

The protein belongs to the RUNDC3 family. In terms of assembly, interacts with the GTP-bound form of RAP2A.

Functionally, may act as an effector of RAP2A in neuronal cells. This Bos taurus (Bovine) protein is RUN domain-containing protein 3A (RUNDC3A).